Consider the following 150-residue polypeptide: Ribonuclease pancreatic (150 aa).

Positions 1 to 26 are cleaved as a signal peptide; the sequence is MALKSLVLLSLLVLVLLLVRVQPSLG. Lys27 and Lys33 each carry an N-linked (Glc) (glycation) lysine; in vitro glycan. Residues Lys33 and Arg36 each contribute to the substrate site. His38 acts as the Proton acceptor in catalysis. 4 disulfide bridges follow: Cys52/Cys110, Cys66/Cys121, Cys84/Cys136, and Cys91/Cys98. An N-linked (GlcNAc...) asparagine; partial glycan is attached at Asn60. N-linked (Glc) (glycation) lysine; in vitro glycosylation is found at Lys63 and Lys67. Substrate-binding positions include 67–71, Lys92, and Arg111; that span reads KPVNT. His145 functions as the Proton donor in the catalytic mechanism.

This sequence belongs to the pancreatic ribonuclease family. As to quaternary structure, interacts with and forms tight 1:1 complexes with RNH1. Dimerization of two such complexes may occur. Interaction with RNH1 inhibits this protein. Monomer. As to expression, pancreas.

The protein resides in the secreted. It carries out the reaction an [RNA] containing cytidine + H2O = an [RNA]-3'-cytidine-3'-phosphate + a 5'-hydroxy-ribonucleotide-3'-[RNA].. The enzyme catalyses an [RNA] containing uridine + H2O = an [RNA]-3'-uridine-3'-phosphate + a 5'-hydroxy-ribonucleotide-3'-[RNA].. Its function is as follows. Endonuclease that catalyzes the cleavage of RNA on the 3' side of pyrimidine nucleotides. Acts on single-stranded and double-stranded RNA. This chain is Ribonuclease pancreatic (RNASE1), found in Bos taurus (Bovine).